A 278-amino-acid chain; its full sequence is Maltodextrin transport system permease protein MdxG (278 aa).

The next 6 helical transmembrane spans lie at 12 to 32, 74 to 94, 108 to 128, 131 to 151, 183 to 203, and 242 to 262; these read ICTYLFLTLLSIVIIYPLLIT, TLVIALSVMVLQVTIVTLAGY, LIFFLIIQMVPTMAALTAFYV, MLIGALDQYWFLTAIYIGGGI, IFASIVLPLVKPMLAVQALWA, and VALFAAGAILAALPICVLFFF. One can recognise an ABC transmembrane type-1 domain in the interval 71–263; that stretch reads YSNTLVIALS…LPICVLFFFL (193 aa).

Belongs to the binding-protein-dependent transport system permease family. MalFG subfamily. As to quaternary structure, the complex is composed of two ATP-binding proteins (MsmX), two transmembrane proteins (MdxF and MdxG) and a solute-binding protein (MdxE).

It is found in the cell membrane. Part of the ABC transporter complex involved in maltodextrin import. Probably responsible for the translocation of the substrate across the membrane. The protein is Maltodextrin transport system permease protein MdxG (mdxG) of Bacillus subtilis (strain 168).